Consider the following 186-residue polypeptide: Putative 5'(3')-deoxyribonucleotidase (186 aa).

Belongs to the 5'(3')-deoxyribonucleotidase family. Mg(2+) serves as cofactor.

In terms of biological role, dephosphorylates the 5' and 2'(3')-phosphates of deoxyribonucleotides. This Bordetella parapertussis (strain 12822 / ATCC BAA-587 / NCTC 13253) protein is Putative 5'(3')-deoxyribonucleotidase.